A 396-amino-acid polypeptide reads, in one-letter code: Elongation factor Tu (396 aa).

Residues 10–206 enclose the tr-type G domain; it reads KPHCNIGTIG…NVDEYIPQPE (197 aa). Positions 19 to 26 are G1; that stretch reads GHVDHGKT. 19-26 is a binding site for GTP; sequence GHVDHGKT. Thr26 contributes to the Mg(2+) binding site. The interval 60 to 64 is G2; the sequence is GITIS. Residues 81–84 form a G3 region; it reads DCPG. GTP is bound by residues 81–85 and 136–139; these read DCPGH and NKCD. A G4 region spans residues 136-139; that stretch reads NKCD. Residues 174–176 form a G5 region; that stretch reads SAL.

Belongs to the TRAFAC class translation factor GTPase superfamily. Classic translation factor GTPase family. EF-Tu/EF-1A subfamily. Monomer.

The protein resides in the cytoplasm. It carries out the reaction GTP + H2O = GDP + phosphate + H(+). In terms of biological role, GTP hydrolase that promotes the GTP-dependent binding of aminoacyl-tRNA to the A-site of ribosomes during protein biosynthesis. The chain is Elongation factor Tu from Bradyrhizobium sp. (strain BTAi1 / ATCC BAA-1182).